The primary structure comprises 130 residues: Sec-independent protein translocase protein TatB (130 aa).

A helical transmembrane segment spans residues 1 to 21; the sequence is MFDIGFWELVLIFVVGLVVLG. The segment at 85 to 130 is disordered; it reads LKQAAQSVNRPYADVSAKNEATSSSSSDATHQTEATKTSAANTKSE. Residues 112-130 are compositionally biased toward polar residues; that stretch reads DATHQTEATKTSAANTKSE.

It belongs to the TatB family. The Tat system comprises two distinct complexes: a TatABC complex, containing multiple copies of TatA, TatB and TatC subunits, and a separate TatA complex, containing only TatA subunits. Substrates initially bind to the TatABC complex, which probably triggers association of the separate TatA complex to form the active translocon.

Its subcellular location is the cell inner membrane. Part of the twin-arginine translocation (Tat) system that transports large folded proteins containing a characteristic twin-arginine motif in their signal peptide across membranes. Together with TatC, TatB is part of a receptor directly interacting with Tat signal peptides. TatB may form an oligomeric binding site that transiently accommodates folded Tat precursor proteins before their translocation. This is Sec-independent protein translocase protein TatB from Vibrio vulnificus (strain CMCP6).